Consider the following 361-residue polypeptide: 5-formaminoimidazole-4-carboxamide-1-(beta)-D-ribofuranosyl 5'-monophosphate synthetase (361 aa).

The 5-amino-1-(5-phospho-beta-D-ribosyl)imidazole-4-carboxamide site is built by His27 and Ser94. Positions 116–348 (RAILRWEAER…MGQRIAKEIK (233 aa)) constitute an ATP-grasp domain. Residues 146 to 208 (PDDI…ANYC) and Glu230 contribute to the ATP site. Asn258 is a 5-amino-1-(5-phospho-beta-D-ribosyl)imidazole-4-carboxamide binding site. Mg(2+)-binding residues include Gln297 and Glu310.

The protein belongs to the phosphohexose mutase family. Requires Mg(2+) as cofactor. Mn(2+) serves as cofactor.

The catalysed reaction is 5-amino-1-(5-phospho-beta-D-ribosyl)imidazole-4-carboxamide + formate + ATP = 5-formamido-1-(5-phospho-D-ribosyl)imidazole-4-carboxamide + ADP + phosphate. The protein operates within purine metabolism; IMP biosynthesis via de novo pathway; 5-formamido-1-(5-phospho-D-ribosyl)imidazole-4-carboxamide from 5-amino-1-(5-phospho-D-ribosyl)imidazole-4-carboxamide (formate route): step 1/1. Its function is as follows. Catalyzes the ATP- and formate-dependent formylation of 5-aminoimidazole-4-carboxamide-1-beta-d-ribofuranosyl 5'-monophosphate (AICAR) to 5-formaminoimidazole-4-carboxamide-1-beta-d-ribofuranosyl 5'-monophosphate (FAICAR) in the absence of folates. The chain is 5-formaminoimidazole-4-carboxamide-1-(beta)-D-ribofuranosyl 5'-monophosphate synthetase from Methanococcus maripaludis (strain C6 / ATCC BAA-1332).